The chain runs to 471 residues: GTPase Der (471 aa).

EngA-type G domains lie at 3 to 168 (PIVA…PDLS) and 178 to 353 (VRVA…ANHA). GTP-binding positions include 9–16 (GRPNVGKS), 56–60 (DTGGI), 120–123 (NKVE), 184–191 (GRPNVGKS), 231–235 (DTAGM), and 296–299 (NKWD). Residues 354–438 (RRISTRELND…PINLYFRTRE (85 aa)) enclose the KH-like domain.

Belongs to the TRAFAC class TrmE-Era-EngA-EngB-Septin-like GTPase superfamily. EngA (Der) GTPase family. As to quaternary structure, associates with the 50S ribosomal subunit.

GTPase that plays an essential role in the late steps of ribosome biogenesis. This Symbiobacterium thermophilum (strain DSM 24528 / JCM 14929 / IAM 14863 / T) protein is GTPase Der.